The sequence spans 406 residues: Acetylornithine/succinyldiaminopimelate aminotransferase (406 aa).

Residues 108-109 (GT) and F141 contribute to the pyridoxal 5'-phosphate site. Residue R144 participates in N(2)-acetyl-L-ornithine binding. Residue 226 to 229 (DEVQ) coordinates pyridoxal 5'-phosphate. K255 is modified (N6-(pyridoxal phosphate)lysine). S283 serves as a coordination point for N(2)-acetyl-L-ornithine. T284 provides a ligand contact to pyridoxal 5'-phosphate.

Belongs to the class-III pyridoxal-phosphate-dependent aminotransferase family. ArgD subfamily. Homodimer. Pyridoxal 5'-phosphate is required as a cofactor.

The protein resides in the cytoplasm. The enzyme catalyses N(2)-acetyl-L-ornithine + 2-oxoglutarate = N-acetyl-L-glutamate 5-semialdehyde + L-glutamate. It catalyses the reaction N-succinyl-(2S,6S)-2,6-diaminopimelate + 2-oxoglutarate = (S)-2-succinylamino-6-oxoheptanedioate + L-glutamate. It functions in the pathway amino-acid biosynthesis; L-arginine biosynthesis; N(2)-acetyl-L-ornithine from L-glutamate: step 4/4. Its pathway is amino-acid biosynthesis; L-lysine biosynthesis via DAP pathway; LL-2,6-diaminopimelate from (S)-tetrahydrodipicolinate (succinylase route): step 2/3. In terms of biological role, involved in both the arginine and lysine biosynthetic pathways. This Escherichia coli O6:H1 (strain CFT073 / ATCC 700928 / UPEC) protein is Acetylornithine/succinyldiaminopimelate aminotransferase.